The primary structure comprises 638 residues: Chaperone protein HtpG (638 aa).

Positions 1–328 (MGDVEELKFS…SSDLPLNISR (328 aa)) are a; substrate-binding. Residues 329–558 (ETLQNNMVIE…EHALDIRMER (230 aa)) form a b region. Residues 484–508 (LEKFTEGDDQQSTKKKKEKKDTDDA) are disordered. The interval 559–638 (FLREQKQLSY…NQVLARLFKK (80 aa)) is c.

Belongs to the heat shock protein 90 family. As to quaternary structure, homodimer.

The protein resides in the cytoplasm. Functionally, molecular chaperone. Has ATPase activity. The sequence is that of Chaperone protein HtpG from Anaplasma marginale (strain St. Maries).